The sequence spans 411 residues: Serine/threonine-protein kinase 54 (411 aa).

2 positions are modified to phosphoserine; by PHOT1: S43 and S45. One can recognise a Protein kinase domain in the interval 108-385; that stretch reads LIIKSVIARG…EEVVAMLEAI (278 aa). ATP contacts are provided by residues 114–122 and K135; that span reads IARGTFGTV. The active-site Proton acceptor is D253. Position 286 is a phosphothreonine (T286).

Belongs to the protein kinase superfamily. Ser/Thr protein kinase family. In terms of assembly, binds to CBC2. Associates with PHOT2, BLUS1 and PM H(+)-ATPase (e.g. AHA1). In terms of processing, autophosphorylated. Phosphorylated in guard cells by HT1 in response to low CO(2) concentrations and by PHOT1 after blue light (BL) exposure. As to expression, expressed in guard cells.

The protein resides in the cytoplasm. The protein localises to the cytosol. It catalyses the reaction L-seryl-[protein] + ATP = O-phospho-L-seryl-[protein] + ADP + H(+). The enzyme catalyses L-threonyl-[protein] + ATP = O-phospho-L-threonyl-[protein] + ADP + H(+). Its function is as follows. Serine/threonine protein kinase that phosphorylates proteins on serine and threonine residues. Collectively with CBC2, acts as a negative regulator of stomatal opening, probably via the inhibition of plasma membrane-type ATPases (AHA1 and AHA2) activity in guard cells, but in an abscisic acid (ABA)-independent manner. However, at low concentrations of CO(2), together with CBC2, stimulates stomatal opening via the inhibition of S-type anion channels in response to blue light (BL) and red light (RL), thus being a key component to maximize photosynthesis in the light under low CO(2) conditions. Required for temperature decrease in leaves. Downstream target of HIGH LEAF TEMPERATURE1 (HT1) during low CO(2)-induced stomatal opening. Also functions in the signaling pathways of phototropins. In Arabidopsis thaliana (Mouse-ear cress), this protein is Serine/threonine-protein kinase 54.